Reading from the N-terminus, the 204-residue chain is ATP phosphoribosyltransferase (204 aa).

It belongs to the ATP phosphoribosyltransferase family. Short subfamily. As to quaternary structure, heteromultimer composed of HisG and HisZ subunits.

Its subcellular location is the cytoplasm. It catalyses the reaction 1-(5-phospho-beta-D-ribosyl)-ATP + diphosphate = 5-phospho-alpha-D-ribose 1-diphosphate + ATP. The protein operates within amino-acid biosynthesis; L-histidine biosynthesis; L-histidine from 5-phospho-alpha-D-ribose 1-diphosphate: step 1/9. Functionally, catalyzes the condensation of ATP and 5-phosphoribose 1-diphosphate to form N'-(5'-phosphoribosyl)-ATP (PR-ATP). Has a crucial role in the pathway because the rate of histidine biosynthesis seems to be controlled primarily by regulation of HisG enzymatic activity. The polypeptide is ATP phosphoribosyltransferase (Staphylococcus aureus (strain USA300)).